The primary structure comprises 209 residues: Uracil phosphoribosyltransferase (209 aa).

5-phospho-alpha-D-ribose 1-diphosphate is bound by residues R79, R104, and 131-139; that span reads DPMLATGGS. Uracil contacts are provided by residues I194 and 199–201; that span reads GDA. D200 contacts 5-phospho-alpha-D-ribose 1-diphosphate.

The protein belongs to the UPRTase family. It depends on Mg(2+) as a cofactor.

It catalyses the reaction UMP + diphosphate = 5-phospho-alpha-D-ribose 1-diphosphate + uracil. It participates in pyrimidine metabolism; UMP biosynthesis via salvage pathway; UMP from uracil: step 1/1. Its activity is regulated as follows. Allosterically activated by GTP. Functionally, catalyzes the conversion of uracil and 5-phospho-alpha-D-ribose 1-diphosphate (PRPP) to UMP and diphosphate. In Lactiplantibacillus plantarum (strain ATCC BAA-793 / NCIMB 8826 / WCFS1) (Lactobacillus plantarum), this protein is Uracil phosphoribosyltransferase.